A 31-amino-acid polypeptide reads, in one-letter code: Cytochrome b6-f complex subunit 6 (31 aa).

The helical transmembrane segment at 3-23 (IAIDYFLLVGFCFAFTSGLYL) threads the bilayer.

Belongs to the PetL family. As to quaternary structure, the 4 large subunits of the cytochrome b6-f complex are cytochrome b6, subunit IV (17 kDa polypeptide, PetD), cytochrome f and the Rieske protein, while the 4 small subunits are PetG, PetL, PetM and PetN. The complex functions as a dimer.

The protein resides in the plastid. Its subcellular location is the chloroplast thylakoid membrane. Its function is as follows. Component of the cytochrome b6-f complex, which mediates electron transfer between photosystem II (PSII) and photosystem I (PSI), cyclic electron flow around PSI, and state transitions. PetL is important for photoautotrophic growth as well as for electron transfer efficiency and stability of the cytochrome b6-f complex. In Trieres chinensis (Marine centric diatom), this protein is Cytochrome b6-f complex subunit 6.